The primary structure comprises 199 residues: Peroxynitrite isomerase (199 aa).

A GXWXGXG motif is present at residues 21 to 27 (GEWEGRG). Residue H190 coordinates heme b.

This sequence belongs to the nitrobindin family. Homodimer. Heme b is required as a cofactor.

The enzyme catalyses peroxynitrite = nitrate. It functions in the pathway nitrogen metabolism. Heme-binding protein able to scavenge peroxynitrite and to protect free L-tyrosine against peroxynitrite-mediated nitration, by acting as a peroxynitrite isomerase that converts peroxynitrite to nitrate. Therefore, this protein likely plays a role in peroxynitrite sensing and in the detoxification of reactive nitrogen and oxygen species (RNS and ROS, respectively). Is able to bind nitric oxide (NO) in vitro, but may act as a sensor of peroxynitrite levels in vivo. The sequence is that of Peroxynitrite isomerase from Paenarthrobacter aurescens (strain TC1).